We begin with the raw amino-acid sequence, 183 residues long: Large ribosomal subunit protein uL10 (183 aa).

The protein belongs to the universal ribosomal protein uL10 family. Part of the ribosomal stalk of the 50S ribosomal subunit. The N-terminus interacts with L11 and the large rRNA to form the base of the stalk. The C-terminus forms an elongated spine to which L12 dimers bind in a sequential fashion forming a multimeric L10(L12)X complex.

Functionally, forms part of the ribosomal stalk, playing a central role in the interaction of the ribosome with GTP-bound translation factors. The chain is Large ribosomal subunit protein uL10 from Mesomycoplasma hyopneumoniae (strain 7448) (Mycoplasma hyopneumoniae).